Consider the following 351-residue polypeptide: tRNA-splicing endonuclease (351 aa).

Active-site residues include Tyr-287, His-298, and Lys-329.

It belongs to the tRNA-intron endonuclease family. Archaeal long subfamily. In terms of assembly, homodimer.

The catalysed reaction is pretRNA = a 3'-half-tRNA molecule with a 5'-OH end + a 5'-half-tRNA molecule with a 2',3'-cyclic phosphate end + an intron with a 2',3'-cyclic phosphate and a 5'-hydroxyl terminus.. In terms of biological role, endonuclease that removes tRNA introns. Cleaves pre-tRNA at the 5'- and 3'-splice sites to release the intron. The products are an intron and two tRNA half-molecules bearing 2',3' cyclic phosphate and 5'-OH termini. Recognizes a pseudosymmetric substrate in which 2 bulged loops of 3 bases are separated by a stem of 4 bp. This Methanococcoides burtonii (strain DSM 6242 / NBRC 107633 / OCM 468 / ACE-M) protein is tRNA-splicing endonuclease.